Consider the following 898-residue polypeptide: Serine/threonine-protein kinase TAO3 (898 aa).

Residues 24–277 form the Protein kinase domain; the sequence is FIDLHEIGHG…AAELLRHDFI (254 aa). ATP-binding positions include 30–38 and K53; that span reads IGHGSFGAV. Residue D147 is the Proton acceptor of the active site. Disordered regions lie at residues 316–372 and 405–424; these read TRNG…EVMD and DEAGHGDPRPEPRPTQSVQS. 5 positions are modified to phosphoserine: S324, S331, S343, S346, and S349. Positions 349–366 are enriched in low complexity; the sequence is SIPSVSVSTGSRSSSVNS. Position 357 is a phosphothreonine (T357). S359 carries the post-translational modification Phosphoserine. Basic and acidic residues predominate over residues 405 to 416; it reads DEAGHGDPRPEP. Residue S442 is modified to Phosphoserine. 3 coiled-coil regions span residues 452 to 502, 548 to 649, and 753 to 871; these read EQEN…THAN, FLES…HAML, and ILKT…QERE. The tract at residues 565 to 596 is disordered; the sequence is EEMNEDHSTPKKEKQERISKHKENLQHTQAEE. The residue at position 830 (K830) is an N6-acetyllysine.

It belongs to the protein kinase superfamily. STE Ser/Thr protein kinase family. STE20 subfamily. In terms of assembly, self-associates. Interacts with ERN1 and TRAF2. Interaction with TRAF2 is facilitated under ER stress conditions, such as treatment with tunicamycin, and may promote TRAF2 phosphorylation. Interacts (via N-terminus) with STK25; the interaction promotes STK25 abundance at the level of protein expression and/or stability. Post-translationally, autophosphorylated. Phosphorylation at Ser-324 by ATM following DNA damage is required for activation of the p38/MAPK14 stress-activated MAPK cascade. Phosphorylated at Ser-324 and on Tyr residues during T cell activation. Phosphorylated by LRRK2. As to expression, ubiquitously expressed, with a higher expression in the retina.

The protein localises to the cytoplasm. The protein resides in the cell membrane. Its subcellular location is the membrane raft. It localises to the lipid droplet. It carries out the reaction L-seryl-[protein] + ATP = O-phospho-L-seryl-[protein] + ADP + H(+). The enzyme catalyses L-threonyl-[protein] + ATP = O-phospho-L-threonyl-[protein] + ADP + H(+). Serine/threonine-protein kinase that acts as a regulator of the p38/MAPK14 stress-activated MAPK cascade and of the MAPK8/JNK cascade. In response to DNA damage, involved in the G2/M transition DNA damage checkpoint by activating the p38/MAPK14 stress-activated MAPK cascade, probably by mediating phosphorylation of upstream MAP2K3 and MAP2K6 kinases. Inhibits basal activity of the MAPK8/JNK cascade and diminishes its activation in response to epidermal growth factor (EGF). Positively regulates canonical T cell receptor (TCR) signaling by preventing early PTPN6/SHP1-mediated inactivation of LCK, ensuring sustained TCR signaling that is required for optimal activation and differentiation of T cells. Phosphorylates PTPN6/SHP1 on 'Thr-396', leading to its polyubiquitination and subsequent proteasomal degradation. Required for cell surface expression of metalloprotease ADAM10 on type 1 transitional B cells which is necessary for their NOTCH-mediated development into marginal zone B cells. Also required for the NOTCH-mediated terminal differentiation of splenic conventional type 2 dendritic cells. Positively regulates osteoblast differentiation by acting as an upstream activator of the JNK pathway. Promotes JNK signaling in hepatocytes and positively regulates hepatocyte lipid storage by inhibiting beta-oxidation and triacylglycerol secretion while enhancing lipid synthesis. Restricts age-associated inflammation by negatively regulating differentiation of macrophages and their production of pro-inflammatory cytokines. Plays a role in negatively regulating the abundance of regulatory T cells in white adipose tissue. In Rattus norvegicus (Rat), this protein is Serine/threonine-protein kinase TAO3 (Taok3).